The primary structure comprises 176 residues: 3-hydroxyanthranilate 3,4-dioxygenase (176 aa).

Arg-44 contacts O2. Residues His-48, Glu-54, and His-92 each coordinate Fe cation. Glu-54 is a substrate binding site. Substrate is bound by residues Arg-96 and Glu-106. The Fe cation site is built by Cys-121, Cys-124, Cys-158, and Cys-161.

The protein belongs to the 3-HAO family. As to quaternary structure, homodimer. The cofactor is Fe(2+).

The catalysed reaction is 3-hydroxyanthranilate + O2 = (2Z,4Z)-2-amino-3-carboxymuconate 6-semialdehyde. Its pathway is cofactor biosynthesis; NAD(+) biosynthesis; quinolinate from L-kynurenine: step 3/3. Functionally, catalyzes the oxidative ring opening of 3-hydroxyanthranilate to 2-amino-3-carboxymuconate semialdehyde, which spontaneously cyclizes to quinolinate. The sequence is that of 3-hydroxyanthranilate 3,4-dioxygenase from Xanthomonas campestris pv. campestris (strain 8004).